The primary structure comprises 487 residues: Betaine aldehyde dehydrogenase (487 aa).

Positions 26 and 93 each coordinate K(+). Residue 150–152 (GAW) participates in NAD(+) binding. Lysine 162 functions as the Charge relay system in the catalytic mechanism. Residues 176 to 179 (KPSE) and 229 to 232 (SVPT) contribute to the NAD(+) site. Leucine 244 is a K(+) binding site. The Proton acceptor role is filled by glutamate 250. NAD(+)-binding residues include glycine 252, cysteine 284, and glutamate 384. The active-site Nucleophile is the cysteine 284. The residue at position 284 (cysteine 284) is a Cysteine sulfenic acid (-SOH). K(+)-binding residues include lysine 454 and glycine 457. The active-site Charge relay system is the glutamate 461.

This sequence belongs to the aldehyde dehydrogenase family. Dimer of dimers. K(+) is required as a cofactor.

The catalysed reaction is betaine aldehyde + NAD(+) + H2O = glycine betaine + NADH + 2 H(+). It participates in amine and polyamine biosynthesis; betaine biosynthesis via choline pathway; betaine from betaine aldehyde: step 1/1. Involved in the biosynthesis of the osmoprotectant glycine betaine. Catalyzes the irreversible oxidation of betaine aldehyde to the corresponding acid. The chain is Betaine aldehyde dehydrogenase from Rhizobium etli (strain CIAT 652).